We begin with the raw amino-acid sequence, 441 residues long: Probable tRNA pseudouridine synthase D (441 aa).

Aspartate 89 functions as the Nucleophile in the catalytic mechanism. The 226-residue stretch at 168-393 folds into the TRUD domain; sequence GVPNFFGVQR…SKGTRREVLL (226 aa).

This sequence belongs to the pseudouridine synthase TruD family.

It carries out the reaction uridine(13) in tRNA = pseudouridine(13) in tRNA. Its function is as follows. Could be responsible for synthesis of pseudouridine from uracil-13 in transfer RNAs. The protein is Probable tRNA pseudouridine synthase D of Methanosarcina acetivorans (strain ATCC 35395 / DSM 2834 / JCM 12185 / C2A).